A 452-amino-acid chain; its full sequence is MGDEQDKRTGKEKLLFYTTAFFILLGTFSLFAFLFLVPFVIEPAFTTIFMQFEEVPALCETYDTEIYYGAKNCSWSSCREGCTKDIYTCTQIRVNYRLNLYNFTDEFNFTEYHINLKEAERILPPVKRTDRYERALRSDYEYDNLGGGTGLDIDLGAGRMEQLNFGDADGSNGYLIEDSEDTRGLSASGTLISDERRPFDEISELNEGLMGNRSMYYYVGARLFPNVKGCGYPPMLNCTIWLKRYTKIGMKFPCYYSKVDPSLVISDLDYWQNTLNLVYSMAIPIPSFIISVIYLTYAYFKIYNEDEETAPLDKNAEDMDIDDIDAVDDSDGAVLADNVAGSQIINMDSTTNDSCLEGVLPNGGPGMTASISQGGSVTTPGPYIAQSPAGSQMTPNSEINSFGHQLKVQMADELSRDSLENGAISTSNSVQGNLSKTMTTSISTPPGPTAAV.

Topologically, residues 1–20 are cytoplasmic; it reads MGDEQDKRTGKEKLLFYTTA. The chain crosses the membrane as a helical span at residues 21–41; it reads FFILLGTFSLFAFLFLVPFVI. Residues 42-274 lie on the Extracellular side of the membrane; it reads EPAFTTIFMQ…ISDLDYWQNT (233 aa). 5 N-linked (GlcNAc...) asparagine glycosylation sites follow: Asn-72, Asn-102, Asn-108, Asn-212, and Asn-237. Residues 275-295 form a helical membrane-spanning segment; that stretch reads LNLVYSMAIPIPSFIISVIYL. Over 296–452 the chain is Cytoplasmic; it reads TYAYFKIYNE…STPPGPTAAV (157 aa). A compositionally biased stretch (polar residues) spans 423–444; that stretch reads AISTSNSVQGNLSKTMTTSIST. A disordered region spans residues 423-452; that stretch reads AISTSNSVQGNLSKTMTTSISTPPGPTAAV.

As to expression, preferentially expressed in the central nervous system of developing embryos, weaker expression is seen in the peripheral nervous system. In pupae and adults, expression is seen predominantly in heads, body and legs.

It is found in the membrane. Functionally, enhances para sodium channel function. Required during pupal development to rescue adult paralysis and also protects adult flies against heat-induced lethality. This Drosophila melanogaster (Fruit fly) protein is Protein tipE (tipE).